A 23-amino-acid chain; its full sequence is Unknown protein NF005 from 2D-PAGE (23 aa).

The disordered stretch occupies residues 1 to 23 (AGKARKQLSKNEDTKLKEQYIXD). A compositionally biased stretch (basic and acidic residues) spans 9-23 (SKNEDTKLKEQYIXD).

The sequence is that of Unknown protein NF005 from 2D-PAGE from Naegleria fowleri (Brain eating amoeba).